Consider the following 103-residue polypeptide: Protein translation factor SUI1 homolog (103 aa).

The protein belongs to the SUI1 family.

This is Protein translation factor SUI1 homolog from Methanocaldococcus jannaschii (strain ATCC 43067 / DSM 2661 / JAL-1 / JCM 10045 / NBRC 100440) (Methanococcus jannaschii).